The chain runs to 186 residues: Protein MTH_152 (186 aa).

The protein belongs to the flavoredoxin family. As to quaternary structure, homodimer. FMN serves as cofactor.

The protein is Protein MTH_152 of Methanothermobacter thermautotrophicus (strain ATCC 29096 / DSM 1053 / JCM 10044 / NBRC 100330 / Delta H) (Methanobacterium thermoautotrophicum).